The chain runs to 81 residues: ATP synthase subunit c, chloroplastic (81 aa).

2 helical membrane-spanning segments follow: residues 3 to 23 (PLIAAASVIAAGLAVGLASIG) and 57 to 77 (LAFMEALTIYGLVVALALLFA).

This sequence belongs to the ATPase C chain family. As to quaternary structure, F-type ATPases have 2 components, F(1) - the catalytic core - and F(0) - the membrane proton channel. F(1) has five subunits: alpha(3), beta(3), gamma(1), delta(1), epsilon(1). F(0) has four main subunits: a(1), b(1), b'(1) and c(10-14). The alpha and beta chains form an alternating ring which encloses part of the gamma chain. F(1) is attached to F(0) by a central stalk formed by the gamma and epsilon chains, while a peripheral stalk is formed by the delta, b and b' chains.

It is found in the plastid. Its subcellular location is the chloroplast thylakoid membrane. F(1)F(0) ATP synthase produces ATP from ADP in the presence of a proton or sodium gradient. F-type ATPases consist of two structural domains, F(1) containing the extramembraneous catalytic core and F(0) containing the membrane proton channel, linked together by a central stalk and a peripheral stalk. During catalysis, ATP synthesis in the catalytic domain of F(1) is coupled via a rotary mechanism of the central stalk subunits to proton translocation. Functionally, key component of the F(0) channel; it plays a direct role in translocation across the membrane. A homomeric c-ring of between 10-14 subunits forms the central stalk rotor element with the F(1) delta and epsilon subunits. The chain is ATP synthase subunit c, chloroplastic from Agrostis stolonifera (Creeping bentgrass).